The sequence spans 135 residues: CTP pyrophosphohydrolase (135 aa).

One can recognise a Nudix hydrolase domain in the interval 2-127 (KMIEVVAAII…DIPLLEAFMA (126 aa)). Substrate is bound by residues 34–39 (FAGGKV), Arg-72, and Asp-118. The Nudix box motif lies at 37–58 (GKVEPDESQRQALVRELREELG).

This sequence belongs to the Nudix hydrolase family. In terms of assembly, monomer. Mg(2+) is required as a cofactor. The cofactor is Mn(2+).

The enzyme catalyses CTP + H2O = CMP + diphosphate + H(+). The catalysed reaction is dCTP + H2O = dCMP + diphosphate + H(+). Functionally, hydrolase with a preference for pyrimidine substrates. Has high activity with 5-methyl-dCTP, and much lower activity with CTP, dCTP, 5-hydroxy-dCTP, 2-hydroxy-dATP and 8-hydroxy-dGTP. This chain is CTP pyrophosphohydrolase (nudG), found in Escherichia coli (strain K12).